The sequence spans 440 residues: Calcium/calmodulin-regulated receptor-like kinase 1 (440 aa).

The chain crosses the membrane as a helical span at residues 8-28; that stretch reads LIVGISLGLVIGVVLAISALF. Residues 28–228 form a calmodulin binding region; the sequence is FCFRYHRKKS…ARGLEYLHDG (201 aa). A Protein kinase domain is found at 113 to 380; that stretch reads CNFTTLIGQG…DIVQVLTRVI (268 aa). ATP contacts are provided by residues 119-127 and Lys141; that span reads IGQGAFGPV. The residue at position 186 (Tyr186) is a Phosphotyrosine. Asp237 acts as the Proton acceptor in catalysis. Ser241 is subject to Phosphoserine. Thr274 carries the phosphothreonine modification. Tyr282 is modified (phosphotyrosine). Residues 369–440 form a calmodulin binding region; that stretch reads MRDIVQVLTR…DSSIAEDVIL (72 aa). The disordered stretch occupies residues 386 to 427; that stretch reads RKRQKNSPSPSPRLPPPPPIVEESEGELTANGSLRSEIHRRD. A compositionally biased stretch (pro residues) spans 394 to 405; the sequence is SPSPRLPPPPPI.

The protein belongs to the protein kinase superfamily. Ser/Thr protein kinase family. In terms of assembly, interacts with calmodulin (CaM) in a calcium- (Ca(2+)-) dependent manner. Binds to MEKK1. In terms of tissue distribution, similar transcript expression levels in seedlings, roots, leaves, stems and flowers, and lower levels in siliques, but protein accumulates mostly in 7-day-old seedlings, old roots and young leaves and, to a lower extent, in young roots, old leaves, flowers and siliques (at protein level).

The protein localises to the cell membrane. Its subcellular location is the endosome membrane. It carries out the reaction L-seryl-[protein] + ATP = O-phospho-L-seryl-[protein] + ADP + H(+). It catalyses the reaction L-threonyl-[protein] + ATP = O-phospho-L-threonyl-[protein] + ADP + H(+). With respect to regulation, kinase activity is stimulated by calcium/calmodulin, but blocked by chlorpromazine. Required for cold tolerance, via the activation of MAP kinases activity. Phosphorylates and activates MEKK1 in response to cold in a calcium-dependent manner. This Arabidopsis thaliana (Mouse-ear cress) protein is Calcium/calmodulin-regulated receptor-like kinase 1.